Consider the following 175-residue polypeptide: Co-chaperone protein HscB homolog (175 aa).

In terms of domain architecture, J spans 2–76; sequence NYFALFNLTP…RAEHMLELRG (75 aa).

Belongs to the HscB family. Interacts with HscA and stimulates its ATPase activity.

In terms of biological role, co-chaperone involved in the maturation of iron-sulfur cluster-containing proteins. Seems to help targeting proteins to be folded toward HscA. The sequence is that of Co-chaperone protein HscB homolog from Pseudoalteromonas atlantica (strain T6c / ATCC BAA-1087).